Consider the following 201-residue polypeptide: Thymidylate kinase (201 aa).

7–14 contributes to the ATP binding site; the sequence is GIDGSGKS.

It belongs to the thymidylate kinase family.

The catalysed reaction is dTMP + ATP = dTDP + ADP. Phosphorylation of dTMP to form dTDP in both de novo and salvage pathways of dTTP synthesis. This chain is Thymidylate kinase, found in Thermosipho africanus (strain TCF52B).